Here is a 445-residue protein sequence, read N- to C-terminus: Exodeoxyribonuclease 7 large subunit (445 aa).

The protein belongs to the XseA family. Heterooligomer composed of large and small subunits.

Its subcellular location is the cytoplasm. The enzyme catalyses Exonucleolytic cleavage in either 5'- to 3'- or 3'- to 5'-direction to yield nucleoside 5'-phosphates.. In terms of biological role, bidirectionally degrades single-stranded DNA into large acid-insoluble oligonucleotides, which are then degraded further into small acid-soluble oligonucleotides. In Staphylococcus aureus (strain JH1), this protein is Exodeoxyribonuclease 7 large subunit.